Consider the following 78-residue polypeptide: Putative membrane protein insertion efficiency factor (78 aa).

This sequence belongs to the UPF0161 family.

The protein resides in the cell membrane. Its function is as follows. Could be involved in insertion of integral membrane proteins into the membrane. In Limosilactobacillus reuteri (strain DSM 20016) (Lactobacillus reuteri), this protein is Putative membrane protein insertion efficiency factor.